The following is a 162-amino-acid chain: Shikimate kinase (162 aa).

11 to 16 (GSGKSS) is a binding site for ATP. S15 is a binding site for Mg(2+). Residues D33, R57, and G80 each coordinate substrate. Position 116 (R116) interacts with ATP. Position 132 (R132) interacts with substrate.

This sequence belongs to the shikimate kinase family. Monomer. The cofactor is Mg(2+).

The protein resides in the cytoplasm. It carries out the reaction shikimate + ATP = 3-phosphoshikimate + ADP + H(+). It functions in the pathway metabolic intermediate biosynthesis; chorismate biosynthesis; chorismate from D-erythrose 4-phosphate and phosphoenolpyruvate: step 5/7. Its function is as follows. Catalyzes the specific phosphorylation of the 3-hydroxyl group of shikimic acid using ATP as a cosubstrate. This chain is Shikimate kinase, found in Helicobacter acinonychis (strain Sheeba).